Here is a 2153-residue protein sequence, read N- to C-terminus: Genome polyprotein (2153 aa).

Gly-2 carries the N-myristoyl glycine; by host lipid modification. The Cytoplasmic portion of the chain corresponds to 2-1466 (GAQVSRQNVG…DLNIANSIIT (1465 aa)). The segment at 565–582 (PITQNPVERYVDEVLNEV) is amphipathic alpha-helix. Catalysis depends on for protease 2A activity residues His-871 and Asp-888. The Zn(2+) site is built by Cys-905 and Cys-907. Catalysis depends on Cys-959, which acts as the For protease 2A activity. Positions 965 and 967 each coordinate Zn(2+). The membrane-binding stretch occupies residues 1091–1160 (SDSWLKKFTE…NLRAADTNTQ (70 aa)). An oligomerization region spans residues 1091-1224 (SDSWLKKFTE…PPGTGKSITT (134 aa)). The interval 1112–1116 (GNKIS) is RNA-binding. An SF3 helicase domain is found at 1186–1346 (KRIKVLYHKC…YKDNQGKLDV (161 aa)). Zn(2+)-binding residues include Cys-1353, Cys-1364, and Cys-1369. A C4-type; degenerate zinc finger spans residues 1353-1369 (CDVDSKIGNAKCCPFVC). An RNA-binding region spans residues 1396–1403 (EDKRRRQV). An oligomerization region spans residues 1407–1412 (MSAIFQ). Residues 1467–1482 (IIANIISIAGIIYIIY) lie within the membrane without spanning it. At 1483–2153 (KLFCSLQGPY…LLRHEWYEKF (671 aa)) the chain is on the cytoplasmic side. O-(5'-phospho-RNA)-tyrosine is present on Tyr-1492. One can recognise a Peptidase C3 domain in the interval 1511 to 1689 (GPEEEFGMSI…FSSMLLRSYF (179 aa)). Active-site for protease 3C activity residues include His-1550, Glu-1581, and Cys-1657. The 114-residue stretch at 1921–2034 (DCIMAFDYTN…SYKYKLDMEA (114 aa)) folds into the RdRp catalytic domain. Mg(2+) is bound by residues Asp-1927 and Asp-2020.

The protein belongs to the picornaviruses polyprotein family. Interacts with capsid protein VP1 and capsid protein VP3 to form heterotrimeric protomers. As to quaternary structure, interacts with capsid protein VP0, and capsid protein VP3 to form heterotrimeric protomers. Five protomers subsequently associate to form pentamers which serve as building blocks for the capsid. Interacts with capsid protein VP2, capsid protein VP3 and capsid protein VP4 following cleavage of capsid protein VP0. In terms of assembly, interacts with capsid protein VP1 and capsid protein VP3 in the mature capsid. Interacts with capsid protein VP0 and capsid protein VP1 to form heterotrimeric protomers. Five protomers subsequently associate to form pentamers which serve as building blocks for the capsid. Interacts with capsid protein VP4 in the mature capsid. Interacts with protein 2C; this interaction may be important for virion morphogenesis. As to quaternary structure, interacts with capsid protein VP1 and capsid protein VP3. In terms of assembly, homodimer. Homohexamer; forms a hexameric ring structure with 6-fold symmetry characteristic of AAA+ ATPases. Interacts (via N-terminus) with host RTN3 (via reticulon domain); this interaction is important for viral replication. Interacts with capsid protein VP3; this interaction may be important for virion morphogenesis. As to quaternary structure, interacts with protein 3CD. In terms of assembly, homodimer. Interacts with host GBF1. Interacts (via GOLD domain) with host ACBD3 (via GOLD domain); this interaction allows the formation of a viral protein 3A/ACBD3 heterotetramer with a 2:2 stoichiometry, which will stimulate the recruitment of host PI4KB in order to synthesize PI4P at the viral RNA replication sites. Interacts with RNA-directed RNA polymerase. As to quaternary structure, interacts with protein 3AB and with RNA-directed RNA polymerase. In terms of assembly, interacts with Viral protein genome-linked and with protein 3CD. Mg(2+) is required as a cofactor. Post-translationally, specific enzymatic cleavages in vivo by the viral proteases yield processing intermediates and the mature proteins. In terms of processing, myristoylation is required for the formation of pentamers during virus assembly. Further assembly of 12 pentamers and a molecule of genomic RNA generates the provirion. During virion maturation, immature virions are rendered infectious following cleavage of VP0 into VP4 and VP2. This maturation seems to be an autocatalytic event triggered by the presence of RNA in the capsid and it is followed by a conformational change infectious virion. Post-translationally, myristoylation is required during RNA encapsidation and formation of the mature virus particle. In terms of processing, VPg is uridylylated by the polymerase into VPg-pUpU. This acts as a nucleotide-peptide primer for the genomic RNA replication.

It is found in the virion. Its subcellular location is the host cytoplasm. The protein resides in the host cytoplasmic vesicle membrane. The protein localises to the host nucleus. The catalysed reaction is a ribonucleoside 5'-triphosphate + H2O = a ribonucleoside 5'-diphosphate + phosphate + H(+). The enzyme catalyses Selective cleavage of Tyr-|-Gly bond in the picornavirus polyprotein.. It carries out the reaction RNA(n) + a ribonucleoside 5'-triphosphate = RNA(n+1) + diphosphate. It catalyses the reaction Selective cleavage of Gln-|-Gly bond in the poliovirus polyprotein. In other picornavirus reactions Glu may be substituted for Gln, and Ser or Thr for Gly.. Replication or transcription is subject to high level of random mutations by the nucleotide analog ribavirin. In terms of biological role, forms an icosahedral capsid of pseudo T=3 symmetry with capsid proteins VP2 and VP3. The capsid is 300 Angstroms in diameter, composed of 60 copies of each capsid protein and enclosing the viral positive strand RNA genome. Capsid protein VP1 mainly forms the vertices of the capsid. Capsid protein VP1 interacts with host cell receptor to provide virion attachment to target host cells. This attachment induces virion internalization. Tyrosine kinases are probably involved in the entry process. After binding to its receptor, the capsid undergoes conformational changes. Capsid protein VP1 N-terminus (that contains an amphipathic alpha-helix) and capsid protein VP4 are externalized. Together, they shape a pore in the host membrane through which viral genome is translocated to host cell cytoplasm. Functionally, forms an icosahedral capsid of pseudo T=3 symmetry with capsid proteins VP2 and VP3. The capsid is 300 Angstroms in diameter, composed of 60 copies of each capsid protein and enclosing the viral positive strand RNA genome. Lies on the inner surface of the capsid shell. After binding to the host receptor, the capsid undergoes conformational changes. Capsid protein VP4 is released, Capsid protein VP1 N-terminus is externalized, and together, they shape a pore in the host membrane through which the viral genome is translocated into the host cell cytoplasm. Its function is as follows. Component of immature procapsids, which is cleaved into capsid proteins VP4 and VP2 after maturation. Allows the capsid to remain inactive before the maturation step. In terms of biological role, cysteine protease that cleaves viral polyprotein and specific host proteins. It is responsible for the autocatalytic cleavage between the P1 and P2 regions, which is the first cleavage occurring in the polyprotein. Also cleaves the host translation initiation factor EIF4G1, in order to shut down the capped cellular mRNA translation. Inhibits the host nucleus-cytoplasm protein and RNA trafficking by cleaving host members of the nuclear pores. Counteracts stress granule formation probably by antagonizing its assembly or promoting its dissassembly. Functionally, plays an essential role in the virus replication cycle by acting as a viroporin. Creates a pore in the host endoplasmic reticulum and as a consequence releases Ca2+ in the cytoplasm of infected cell. In turn, high levels of cytoplasmic calcium may trigger membrane trafficking and transport of viral ER-associated proteins to viroplasms, sites of viral genome replication. Induces and associates with structural rearrangements of intracellular membranes. Displays RNA-binding, nucleotide binding and NTPase activities. May play a role in virion morphogenesis and viral RNA encapsidation by interacting with the capsid protein VP3. Its function is as follows. Localizes the viral replication complex to the surface of membranous vesicles. It inhibits host cell endoplasmic reticulum-to-Golgi apparatus transport and causes the disassembly of the Golgi complex, possibly through GBF1 interaction. This would result in depletion of MHC, trail receptors and IFN receptors at the host cell surface. Plays an essential role in viral RNA replication by recruiting ACBD3 and PI4KB at the viral replication sites, thereby allowing the formation of the rearranged membranous structures where viral replication takes place. In terms of biological role, acts as a primer for viral RNA replication and remains covalently bound to viral genomic RNA. VPg is uridylylated prior to priming replication into VPg-pUpU. The oriI viral genomic sequence may act as a template for this. The VPg-pUpU is then used as primer on the genomic RNA poly(A) by the RNA-dependent RNA polymerase to replicate the viral genome. During genome replication, the VPg-RNA linkage is removed by the host TDP2, thereby accelerating replication. During the late stage of the replication cycle, host TDP2 is excluded from sites of viral RNA synthesis and encapsidation, allowing for the generation of progeny virions. Functionally, involved in the viral replication complex and viral polypeptide maturation. It exhibits protease activity with a specificity and catalytic efficiency that is different from protease 3C. Protein 3CD lacks polymerase activity. Protein 3CD binds to the 5'UTR of the viral genome. Major viral protease that mediates proteolytic processing of the polyprotein. Cleaves host EIF5B, contributing to host translation shutoff. Also cleaves host PABPC1, contributing to host translation shutoff. Cleaves host NLRP1, triggers host N-glycine-mediated degradation of the autoinhibitory NLRP1 N-terminal fragment. Its function is as follows. Replicates the viral genomic RNA on the surface of intracellular membranes. May form linear arrays of subunits that propagate along a strong head-to-tail interaction called interface-I. Covalently attaches UMP to a tyrosine of VPg, which is used to prime RNA synthesis. The positive stranded RNA genome is first replicated at virus induced membranous vesicles, creating a dsRNA genomic replication form. This dsRNA is then used as template to synthesize positive stranded RNA genomes. ss(+)RNA genomes are either translated, replicated or encapsidated. The sequence is that of Genome polyprotein from Human rhinovirus 16 (HRV-16).